The following is a 533-amino-acid chain: Glucose-6-phosphate isomerase (533 aa).

Residue glutamate 322 is the Proton donor of the active site. Catalysis depends on residues histidine 351 and lysine 455.

The protein belongs to the GPI family.

The protein resides in the cytoplasm. It carries out the reaction alpha-D-glucose 6-phosphate = beta-D-fructose 6-phosphate. It participates in carbohydrate biosynthesis; gluconeogenesis. It functions in the pathway carbohydrate degradation; glycolysis; D-glyceraldehyde 3-phosphate and glycerone phosphate from D-glucose: step 2/4. Functionally, catalyzes the reversible isomerization of glucose-6-phosphate to fructose-6-phosphate. This chain is Glucose-6-phosphate isomerase, found in Desulfitobacterium hafniense (strain Y51).